Reading from the N-terminus, the 97-residue chain is Integration host factor subunit alpha (97 aa).

This sequence belongs to the bacterial histone-like protein family. Heterodimer of an alpha and a beta chain.

Its function is as follows. This protein is one of the two subunits of integration host factor, a specific DNA-binding protein that functions in genetic recombination as well as in transcriptional and translational control. The polypeptide is Integration host factor subunit alpha (Colwellia psychrerythraea (strain 34H / ATCC BAA-681) (Vibrio psychroerythus)).